Reading from the N-terminus, the 185-residue chain is Ribosome-recycling factor (185 aa).

The protein belongs to the RRF family.

It is found in the cytoplasm. Functionally, responsible for the release of ribosomes from messenger RNA at the termination of protein biosynthesis. May increase the efficiency of translation by recycling ribosomes from one round of translation to another. The protein is Ribosome-recycling factor of Trichlorobacter lovleyi (strain ATCC BAA-1151 / DSM 17278 / SZ) (Geobacter lovleyi).